The following is a 74-amino-acid chain: Defensin (74 aa).

Positions 1–22 (MRGLCICLVFLLVCGLVSATAA) are cleaved as a signal peptide. A propeptide spanning residues 23–36 (APAESEVAHLRVRR) is cleaved from the precursor. Cystine bridges form between Cys40–Cys61, Cys47–Cys69, and Cys51–Cys71.

As to expression, hemolymph.

The protein resides in the secreted. Antibacterial activity against Gram-positive and Gram-negative bacteria. This chain is Defensin (VSNA1), found in Dermacentor variabilis (American dog tick).